The primary structure comprises 502 residues: Glycerol kinase (502 aa).

Position 14 (T14) interacts with ADP. T14, T15, and S16 together coordinate ATP. Residue T14 participates in sn-glycerol 3-phosphate binding. R18 is an ADP binding site. Sn-glycerol 3-phosphate contacts are provided by R84, E85, Y136, and D246. Residues R84, E85, Y136, D246, and Q247 each coordinate glycerol. Residues T268 and G311 each contribute to the ADP site. ATP contacts are provided by T268, G311, Q315, and G412. 2 residues coordinate ADP: G412 and N416.

It belongs to the FGGY kinase family.

The catalysed reaction is glycerol + ATP = sn-glycerol 3-phosphate + ADP + H(+). The protein operates within polyol metabolism; glycerol degradation via glycerol kinase pathway; sn-glycerol 3-phosphate from glycerol: step 1/1. Its activity is regulated as follows. Inhibited by fructose 1,6-bisphosphate (FBP). Its function is as follows. Key enzyme in the regulation of glycerol uptake and metabolism. Catalyzes the phosphorylation of glycerol to yield sn-glycerol 3-phosphate. The sequence is that of Glycerol kinase from Pasteurella multocida (strain Pm70).